A 350-amino-acid polypeptide reads, in one-letter code: MNLRGLFQDFNPSKFLIYACLLLFSVLLALRLDGIIQWSYWAVFAPIWLWKLMVIVGASVGTGVWARNPQYRAEGETCVEFKAMLIAVGIHLLLLMFEVLVCDRIERGSHFWLLVFMPLFFVSPVSVAACVWDFRHDRSLELEILCSVNILQFIFIALRLDKIIHWPWLVVCVPLWILMSFLCLVVLYYIVWSVLFLRSMDVIAEQRRTHITMALSWMTIVVPLLTFEILLVHKLDGHNAFSCIPIFVPLWLSLITLMATTFGQKGGNHWWFGIRKDFCQFLLEIFPFLREYGNISYDLHHEDNEETEETPVPEPPKIAPMFRKKARVVITQSPGKYALPPPKLNIEMPD.

Helical transmembrane passes span 16–36 (LIYA…DGII), 41–61 (WAVF…ASVG), 81–101 (FKAM…EVLV), 111–131 (FWLL…AACV), 177–197 (ILMS…VLFL), 211–231 (ITMA…EILL), and 240–260 (AFSC…LMAT). Positions 298–350 (DLHHEDNEETEETPVPEPPKIAPMFRKKARVVITQSPGKYALPPPKLNIEMPD) are mediates interaction with MAP1B.

The protein belongs to the TMEM185 family. As to quaternary structure, interacts with MAP1B.

It is found in the cell projection. The protein resides in the dendrite. It localises to the membrane. This Pongo abelii (Sumatran orangutan) protein is Transmembrane protein 185A (TMEM185A).